A 409-amino-acid chain; its full sequence is 4-hydroxy-3-methylbut-2-en-1-yl diphosphate synthase (flavodoxin) (409 aa).

Cys-298, Cys-301, Cys-344, and Glu-351 together coordinate [4Fe-4S] cluster.

This sequence belongs to the IspG family. It depends on [4Fe-4S] cluster as a cofactor.

The enzyme catalyses (2E)-4-hydroxy-3-methylbut-2-enyl diphosphate + oxidized [flavodoxin] + H2O + 2 H(+) = 2-C-methyl-D-erythritol 2,4-cyclic diphosphate + reduced [flavodoxin]. It functions in the pathway isoprenoid biosynthesis; isopentenyl diphosphate biosynthesis via DXP pathway; isopentenyl diphosphate from 1-deoxy-D-xylulose 5-phosphate: step 5/6. Functionally, converts 2C-methyl-D-erythritol 2,4-cyclodiphosphate (ME-2,4cPP) into 1-hydroxy-2-methyl-2-(E)-butenyl 4-diphosphate. The chain is 4-hydroxy-3-methylbut-2-en-1-yl diphosphate synthase (flavodoxin) from Dechloromonas aromatica (strain RCB).